The chain runs to 556 residues: Arginine--tRNA ligase (556 aa).

The 'HIGH' region motif lies at 132 to 142 (ANPTGDLHLGH).

It belongs to the class-I aminoacyl-tRNA synthetase family. As to quaternary structure, monomer.

The protein localises to the cytoplasm. The enzyme catalyses tRNA(Arg) + L-arginine + ATP = L-arginyl-tRNA(Arg) + AMP + diphosphate. This chain is Arginine--tRNA ligase, found in Bacillus cereus (strain ATCC 14579 / DSM 31 / CCUG 7414 / JCM 2152 / NBRC 15305 / NCIMB 9373 / NCTC 2599 / NRRL B-3711).